An 88-amino-acid chain; its full sequence is UPF0335 protein WRi_003770 (88 aa).

This sequence belongs to the UPF0335 family.

In Wolbachia sp. subsp. Drosophila simulans (strain wRi), this protein is UPF0335 protein WRi_003770.